The chain runs to 164 residues: Peptidyl-prolyl cis-trans isomerase A-like 4A (164 aa).

The 157-residue stretch at 7-163 (FFDITVDGKP…KKITIADCGQ (157 aa)) folds into the PPIase cyclophilin-type domain.

It belongs to the cyclophilin-type PPIase family. PPIase A subfamily. As to expression, highly expressed in brain, ovary and mammary gland. Moderately expressed in lung, salivary gland, kidney, skin, adipose tissue, intestine and spleen. Weakly expressed in skeletal muscle, liver and stomach. Expressed in pleiomorphic and undifferentiated liposarcomas, osteosarcomas and breast carcinomas.

The protein resides in the cytoplasm. The enzyme catalyses [protein]-peptidylproline (omega=180) = [protein]-peptidylproline (omega=0). Functionally, PPIases accelerate the folding of proteins. It catalyzes the cis-trans isomerization of proline imidic peptide bonds in oligopeptides. This Homo sapiens (Human) protein is Peptidyl-prolyl cis-trans isomerase A-like 4A.